The primary structure comprises 398 residues: Nuclear egress protein 2 (398 aa).

Residues Met-1–Trp-359 are Perinuclear space-facing. Disordered stretches follow at residues Ala-202–Pro-246 and Leu-306–Arg-334. Pro residues predominate over residues Ala-215–His-224. Ser-216 bears the Phosphoserine mark. Over residues Pro-225–Gly-240 the composition is skewed to low complexity. Basic residues predominate over residues Ser-311–Pro-323. The chain crosses the membrane as a helical span at residues Leu-360–Trp-382. At Arg-383 to Asp-398 the chain is on the nuclear side.

It belongs to the herpesviridae NEC2 protein family. In terms of assembly, forms a heterohexameric complex with NEC1. Interacts with host UBA7 and RNF170; this interaction promotes UBA7 proteasomal degradation. Post-translationally, phosphorylated. Phosphorylation by viral kinase UL97 at Ser-216 plays an important role for correct viral nuclear egress complex (NEC) localization.

Its subcellular location is the host nucleus inner membrane. Functionally, plays an essential role in virion nuclear egress, the first step of virion release from infected cell. Within the host nucleus, NEC1 interacts with the newly formed capsid through the vertexes and directs it to the inner nuclear membrane by associating with NEC2. Induces the budding of the capsid at the inner nuclear membrane as well as its envelopment into the perinuclear space. There, the NEC1/NEC2 complex promotes the fusion of the enveloped capsid with the outer nuclear membrane and the subsequent release of the viral capsid into the cytoplasm where it will reach the secondary budding sites in the host Golgi or trans-Golgi network. Inhibits host ISGylation and subsequent innate antiviral response by targeting host UBA7 for proteasomal degradation. This chain is Nuclear egress protein 2, found in Homo sapiens (Human).